The primary structure comprises 300 residues: Acetylglutamate kinase (300 aa).

Substrate contacts are provided by residues 68–69 (GG), R90, and N194.

It belongs to the acetylglutamate kinase family. ArgB subfamily.

It is found in the cytoplasm. It carries out the reaction N-acetyl-L-glutamate + ATP = N-acetyl-L-glutamyl 5-phosphate + ADP. Its pathway is amino-acid biosynthesis; L-arginine biosynthesis; N(2)-acetyl-L-ornithine from L-glutamate: step 2/4. Functionally, catalyzes the ATP-dependent phosphorylation of N-acetyl-L-glutamate. This is Acetylglutamate kinase from Methanocaldococcus jannaschii (strain ATCC 43067 / DSM 2661 / JAL-1 / JCM 10045 / NBRC 100440) (Methanococcus jannaschii).